Consider the following 485-residue polypeptide: tRNA sulfurtransferase (485 aa).

A THUMP domain is found at 63 to 167; it reads DKLVERLSCM…NELLYLVTAI (105 aa). ATP-binding positions include 185-186, K267, G289, and Q298; that span reads LI. C346 and C458 are joined by a disulfide. One can recognise a Rhodanese domain in the interval 406 to 485; the sequence is LAENEVILDI…FNNIKVYRQN (80 aa). The Cysteine persulfide intermediate role is filled by C458.

This sequence belongs to the ThiI family.

Its subcellular location is the cytoplasm. It catalyses the reaction [ThiI sulfur-carrier protein]-S-sulfanyl-L-cysteine + a uridine in tRNA + 2 reduced [2Fe-2S]-[ferredoxin] + ATP + H(+) = [ThiI sulfur-carrier protein]-L-cysteine + a 4-thiouridine in tRNA + 2 oxidized [2Fe-2S]-[ferredoxin] + AMP + diphosphate. The catalysed reaction is [ThiS sulfur-carrier protein]-C-terminal Gly-Gly-AMP + S-sulfanyl-L-cysteinyl-[cysteine desulfurase] + AH2 = [ThiS sulfur-carrier protein]-C-terminal-Gly-aminoethanethioate + L-cysteinyl-[cysteine desulfurase] + A + AMP + 2 H(+). The protein operates within cofactor biosynthesis; thiamine diphosphate biosynthesis. Catalyzes the ATP-dependent transfer of a sulfur to tRNA to produce 4-thiouridine in position 8 of tRNAs, which functions as a near-UV photosensor. Also catalyzes the transfer of sulfur to the sulfur carrier protein ThiS, forming ThiS-thiocarboxylate. This is a step in the synthesis of thiazole, in the thiamine biosynthesis pathway. The sulfur is donated as persulfide by IscS. This Tolumonas auensis (strain DSM 9187 / NBRC 110442 / TA 4) protein is tRNA sulfurtransferase.